The primary structure comprises 409 residues: Arginine deiminase (409 aa).

Cys398 acts as the Amidino-cysteine intermediate in catalysis.

Belongs to the arginine deiminase family.

The protein resides in the cytoplasm. It catalyses the reaction L-arginine + H2O = L-citrulline + NH4(+). Its pathway is amino-acid degradation; L-arginine degradation via ADI pathway; carbamoyl phosphate from L-arginine: step 1/2. This Metamycoplasma arthritidis (strain 158L3-1) (Mycoplasma arthritidis) protein is Arginine deiminase.